The chain runs to 189 residues: Ribosome maturation factor RimM (189 aa).

Positions Met1–Thr16 are enriched in polar residues. Residues Met1–Asp21 form a disordered region. The 72-residue stretch at Glu118 to Tyr189 folds into the PRC barrel domain.

The protein belongs to the RimM family. As to quaternary structure, binds ribosomal protein uS19.

Its subcellular location is the cytoplasm. Its function is as follows. An accessory protein needed during the final step in the assembly of 30S ribosomal subunit, possibly for assembly of the head region. Essential for efficient processing of 16S rRNA. May be needed both before and after RbfA during the maturation of 16S rRNA. It has affinity for free ribosomal 30S subunits but not for 70S ribosomes. The sequence is that of Ribosome maturation factor RimM from Thiobacillus denitrificans (strain ATCC 25259 / T1).